A 405-amino-acid chain; its full sequence is MPLLLYTCLLWLSTSGLWTVQAMDPNTTYVNMSNHHRGLASANVDFAFSLYKHLVALSPKKNIFISPVSISMALAMLSLGTCGHTRAQLLQGLGFNLTGRSETEIHQGFQHLHQLFAESDTSLEMTMGNALFLDGSLELLESFSADIKHYYESEVLAMNFQDWATASRQINSYVKSKTQGKIADLLSGLDSPAILVLVNYIFFKGTWTQPFDLASTREENFYVDETTVVKVPMMLQSSTISYLHDSELPCQLVRLNYVGNGTVFFILPEKGKMNTVIAALSRDTINRWSAGLTSSQVDLYIPKVTISGVYDLGDVLEEMGIADLFTNQANFSRITQDAQLKSSKVVHKAVLQLNEEGVDTAGSTGVTLNLTSKPIILRFNQPFIIMIFDHFTWSSLFLARVVNPA.

Positions 1-22 are cleaved as a signal peptide; that stretch reads MPLLLYTCLLWLSTSGLWTVQA. Residues Asn26, Asn31, Asn96, and Asn260 are each glycosylated (N-linked (GlcNAc...) asparagine). Asn286 contacts cortisol. Residues Asn330 and Asn369 are each glycosylated (N-linked (GlcNAc...) asparagine). Residue Trp393 coordinates cortisol.

It belongs to the serpin family. In terms of tissue distribution, expressed by the liver; secreted in plasma.

It localises to the secreted. Functionally, major transport protein for glucocorticoids and progestins in the blood of almost all vertebrate species. The sequence is that of Corticosteroid-binding globulin (SERPINA6) from Pongo abelii (Sumatran orangutan).